Consider the following 174-residue polypeptide: uncharacterized protein (174 aa).

This is an uncharacterized protein from Homo sapiens (Human).